Reading from the N-terminus, the 302-residue chain is F-box protein SKIP19 (302 aa).

The F-box domain occupies 16–63; it reads STNWTELPPELTSAILHRLGAIEILENAQKVCRSWRRVCKDPSMWRKI.

As to quaternary structure, part of a SCF (ASK-cullin-F-box) protein ligase complex. Interacts with CUL1 and SPK1B/ASK2.

The protein localises to the nucleus. The protein operates within protein modification; protein ubiquitination. Its function is as follows. Component of SCF(ASK-cullin-F-box) E3 ubiquitin ligase complexes, which may mediate the ubiquitination and subsequent proteasomal degradation of target proteins. The chain is F-box protein SKIP19 (SKIP19) from Arabidopsis thaliana (Mouse-ear cress).